The sequence spans 34 residues: VATVQGLSGTGSLRNLGLYAERQIGMFSFTGLNK.

This sequence belongs to the class-I pyridoxal-phosphate-dependent aminotransferase family. In terms of assembly, homodimer. Requires pyridoxal 5'-phosphate as cofactor.

It carries out the reaction L-aspartate + 2-oxoglutarate = oxaloacetate + L-glutamate. Its function is as follows. Important for the metabolism of amino acids and Krebs-cycle related organic acids. In plants, it is involved in nitrogen metabolism and in aspects of carbon and energy metabolism. This Pseudotsuga menziesii (Douglas-fir) protein is Aspartate aminotransferase 2.